Consider the following 865-residue polypeptide: Probable alpha/beta-glucosidase ARB_02101 (865 aa).

The first 21 residues, 1–21 (MFGRTLALAAVFATTVLSAAA), serve as a signal peptide directing secretion. 2 N-linked (GlcNAc...) asparagine glycosylation sites follow: N101 and N299. The active-site Nucleophile is D428. E431 is a catalytic residue. A glycan (N-linked (GlcNAc...) asparagine) is linked at N515. D548 serves as the catalytic Proton donor. 3 N-linked (GlcNAc...) asparagine glycosylation sites follow: N549, N585, and N748.

This sequence belongs to the glycosyl hydrolase 31 family.

It localises to the secreted. The catalysed reaction is Hydrolysis of terminal, non-reducing (1-&gt;4)-linked alpha-D-glucose residues with release of alpha-D-glucose.. It catalyses the reaction Hydrolysis of terminal, non-reducing beta-D-glucosyl residues with release of beta-D-glucose.. In terms of biological role, glucosidase involved in the degradation of cellulosic biomass. Has both alpha- and beta-glucosidase activity. The sequence is that of Probable alpha/beta-glucosidase ARB_02101 from Arthroderma benhamiae (strain ATCC MYA-4681 / CBS 112371) (Trichophyton mentagrophytes).